An 82-amino-acid chain; its full sequence is UPF0337 protein PP_2059 (82 aa).

The protein belongs to the UPF0337 (CsbD) family.

The polypeptide is UPF0337 protein PP_2059 (Pseudomonas putida (strain ATCC 47054 / DSM 6125 / CFBP 8728 / NCIMB 11950 / KT2440)).